We begin with the raw amino-acid sequence, 156 residues long: Small ribosomal subunit protein uS7 (156 aa).

The protein belongs to the universal ribosomal protein uS7 family. In terms of assembly, part of the 30S ribosomal subunit. Contacts proteins S9 and S11.

Its function is as follows. One of the primary rRNA binding proteins, it binds directly to 16S rRNA where it nucleates assembly of the head domain of the 30S subunit. Is located at the subunit interface close to the decoding center, probably blocks exit of the E-site tRNA. The polypeptide is Small ribosomal subunit protein uS7 (Caldanaerobacter subterraneus subsp. tengcongensis (strain DSM 15242 / JCM 11007 / NBRC 100824 / MB4) (Thermoanaerobacter tengcongensis)).